The following is a 98-amino-acid chain: Large ribosomal subunit protein uL23 (98 aa).

It belongs to the universal ribosomal protein uL23 family. As to quaternary structure, part of the 50S ribosomal subunit. Contacts protein L29, and trigger factor when it is bound to the ribosome.

Functionally, one of the early assembly proteins it binds 23S rRNA. One of the proteins that surrounds the polypeptide exit tunnel on the outside of the ribosome. Forms the main docking site for trigger factor binding to the ribosome. The chain is Large ribosomal subunit protein uL23 from Rickettsia peacockii (strain Rustic).